Here is a 552-residue protein sequence, read N- to C-terminus: Urocanate hydratase (552 aa).

NAD(+)-binding positions include 49-50 (GG), Gln-127, 173-175 (GMG), Asp-193, 239-240 (NA), 260-264 (QTSAH), 270-271 (YI), and Tyr-319. Residue Cys-407 is part of the active site. Gly-489 is an NAD(+) binding site.

This sequence belongs to the urocanase family. NAD(+) is required as a cofactor.

It is found in the cytoplasm. It carries out the reaction 4-imidazolone-5-propanoate = trans-urocanate + H2O. The protein operates within amino-acid degradation; L-histidine degradation into L-glutamate; N-formimidoyl-L-glutamate from L-histidine: step 2/3. Its function is as follows. Catalyzes the conversion of urocanate to 4-imidazolone-5-propionate. This Bacillus cereus (strain 03BB102) protein is Urocanate hydratase.